A 320-amino-acid polypeptide reads, in one-letter code: Malate dehydrogenase (320 aa).

NAD(+)-binding positions include 10–15 (GSGMIG) and Asp34. Positions 83 and 89 each coordinate substrate. NAD(+) is bound by residues Asn96 and 119 to 121 (ITN). Positions 121 and 152 each coordinate substrate. The Proton acceptor role is filled by His176.

This sequence belongs to the LDH/MDH superfamily. MDH type 3 family.

The enzyme catalyses (S)-malate + NAD(+) = oxaloacetate + NADH + H(+). Functionally, catalyzes the reversible oxidation of malate to oxaloacetate. The protein is Malate dehydrogenase of Rhizobium rhizogenes (strain K84 / ATCC BAA-868) (Agrobacterium radiobacter).